The primary structure comprises 149 residues: Protein OPG200 (149 aa).

The protein belongs to the orthopoxvirus OPG200 family. Homodimers. Interacts with host IKBKB; this interaction inhibits host NF-kappa-B activation.

In terms of biological role, contributes to virulence by binding to the host IKBKB subunit of the IKK complex and preventing host NF-kappa-B activation in response to pro-inflammatory stimuli such as TNF-alpha or IL1B. Mechanistically, sterically hinders the direct contact between the kinase domains of IKBKB in the IKK complex containing IKBKB, CHUK/IKKA and NEMO. The chain is Protein OPG200 (OPG200) from Vaccinia virus (strain Western Reserve) (VACV).